Here is a 380-residue protein sequence, read N- to C-terminus: Cytochrome b (380 aa).

4 helical membrane-spanning segments follow: residues 33–53 (FGSLLGVCLMIQILTGLFLAM), 77–98 (WLIRYLHANGASMFFICLFIHV), 113–133 (WNIGIILLLTTMATAFVGYVL), and 178–198 (FFAFHFILPFIITALVLVHLL). Heme b-binding residues include His83 and His97. The heme b site is built by His182 and His196. Residue His201 participates in a ubiquinone binding. 4 helical membrane-spanning segments follow: residues 226–246 (IKDLLGVLLLLMVLMILVLFF), 288–308 (LGGVLALILSILILAAFPLLN), 320–340 (LTQFLYWVFIANLLVLTWIGG), and 347–367 (FTTIGQISSVLYFTIILVLMP).

The protein belongs to the cytochrome b family. The cytochrome bc1 complex contains 11 subunits: 3 respiratory subunits (MT-CYB, CYC1 and UQCRFS1), 2 core proteins (UQCRC1 and UQCRC2) and 6 low-molecular weight proteins (UQCRH/QCR6, UQCRB/QCR7, UQCRQ/QCR8, UQCR10/QCR9, UQCR11/QCR10 and a cleavage product of UQCRFS1). This cytochrome bc1 complex then forms a dimer. Heme b serves as cofactor.

Its subcellular location is the mitochondrion inner membrane. In terms of biological role, component of the ubiquinol-cytochrome c reductase complex (complex III or cytochrome b-c1 complex) that is part of the mitochondrial respiratory chain. The b-c1 complex mediates electron transfer from ubiquinol to cytochrome c. Contributes to the generation of a proton gradient across the mitochondrial membrane that is then used for ATP synthesis. The protein is Cytochrome b (MT-CYB) of Thomasomys notatus (Distinguished oldfield mouse).